The chain runs to 359 residues: Outer membrane protein A (359 aa).

Positions 1–21 are cleaved as a signal peptide; that stretch reads MKKTAIALAVALAGFATVAQA. 8 consecutive transmembrane segments (beta stranded) span residues 27 to 37, 62 to 73, 77 to 85, 103 to 114, 119 to 127, 154 to 163, 168 to 175, and 194 to 202; these read TWYTGAKLGWS, QLGAGAFLGYQA, LGFELGYDW, QGVQLAAKLSYP, LDIYTRLGG, PLAAVGVEYA, WATRLDYQ, and MLSLGVSYR. 5 consecutive repeat copies span residues 210–211, 212–213, 214–215, 216–217, and 218–219. Positions 210 to 219 are 5 X 2 AA tandem repeats of A-P; that stretch reads APAPAPAPAP. The region spanning 221–351 is the OmpA-like domain; that stretch reads VETKRFTLKS…RVEIEVKGIK (131 aa). A disulfide bond links cysteine 322 and cysteine 336.

It belongs to the outer membrane OOP (TC 1.B.6) superfamily. OmpA family. As to quaternary structure, monomer and homodimer.

The protein resides in the cell outer membrane. Functionally, with TolR probably plays a role in maintaining the position of the peptidoglycan cell wall in the periplasm. Acts as a porin with low permeability that allows slow penetration of small solutes; an internal gate slows down solute passage. The protein is Outer membrane protein A of Serratia marcescens.